Here is a 235-residue protein sequence, read N- to C-terminus: Cytidylate kinase (235 aa).

16-24 (GPAASGKST) provides a ligand contact to ATP.

Belongs to the cytidylate kinase family. Type 1 subfamily.

The protein resides in the cytoplasm. The catalysed reaction is CMP + ATP = CDP + ADP. It carries out the reaction dCMP + ATP = dCDP + ADP. This chain is Cytidylate kinase, found in Chloroherpeton thalassium (strain ATCC 35110 / GB-78).